The chain runs to 319 residues: Cobalamin biosynthesis protein CbiB (319 aa).

5 consecutive transmembrane segments (helical) span residues 56-76 (VMWV…LALA), 82-102 (WFGW…RSLA), 153-173 (VDGI…LAMA), 204-224 (VANY…AGLC), and 296-316 (LMWV…CGLS).

It belongs to the CobD/CbiB family.

It is found in the cell membrane. Its pathway is cofactor biosynthesis; adenosylcobalamin biosynthesis. Converts cobyric acid to cobinamide by the addition of aminopropanol on the F carboxylic group. However, the true cosubstrate could be (R)-1-amino-2-propanol O-2-phosphate, leading to cobinamide phosphate. The protein is Cobalamin biosynthesis protein CbiB of Salmonella paratyphi B (strain ATCC BAA-1250 / SPB7).